The chain runs to 446 residues: C4-dicarboxylate transport protein 2 (446 aa).

10 consecutive transmembrane segments (helical) span residues 7 to 26 (PLFG…GIWA), 46 to 64 (MLIA…CGAG), 77 to 99 (VIYF…YAFG), 152 to 171 (ILQV…LLGE), 192 to 211 (AVVI…FTVG), 221 to 243 (LGFL…LGGI), 291 to 313 (VVGL…YLTL), 318 to 340 (IAQA…VALI), 353 to 375 (IVIL…VLVL), and 381 to 403 (IGIA…IAAW).

It belongs to the dicarboxylate/amino acid:cation symporter (DAACS) (TC 2.A.23) family.

The protein localises to the cell inner membrane. Responsible for the transport of dicarboxylates such as succinate, fumarate, and malate from the periplasm across the membrane. The polypeptide is C4-dicarboxylate transport protein 2 (dctA2) (Ralstonia nicotianae (strain ATCC BAA-1114 / GMI1000) (Ralstonia solanacearum)).